The sequence spans 815 residues: Probable bifunctional folylpolyglutamate synthase/dihydropteroate synthase (815 aa).

The segment at 1 to 416 is folylpolyglutamate synthase; it reads MRYDEAANFL…LVAGSLFAVA (416 aa). ATP is bound at residue 47 to 53; it reads GSNGKGS. The Pterin-binding domain occupies 553–803; that stretch reads TAVMGILNVT…DVPENVAAVR (251 aa). The DHPS stretch occupies residues 555-815; the sequence is VMGILNVTPD…EATRTGADAE (261 aa). Asparagine 560 serves as a coordination point for Mg(2+). (7,8-dihydropterin-6-yl)methyl diphosphate is bound by residues threonine 600, aspartate 633, asparagine 652, aspartate 722, lysine 758, and 791 to 793; that span reads RVH.

It in the N-terminal section; belongs to the folylpolyglutamate synthase family. The protein in the C-terminal section; belongs to the DHPS family. It depends on Mg(2+) as a cofactor.

It catalyses the reaction (6S)-5,6,7,8-tetrahydrofolyl-(gamma-L-Glu)(n) + L-glutamate + ATP = (6S)-5,6,7,8-tetrahydrofolyl-(gamma-L-Glu)(n+1) + ADP + phosphate + H(+). It carries out the reaction (7,8-dihydropterin-6-yl)methyl diphosphate + 4-aminobenzoate = 7,8-dihydropteroate + diphosphate. The protein operates within cofactor biosynthesis; tetrahydrofolylpolyglutamate biosynthesis. It functions in the pathway cofactor biosynthesis; tetrahydrofolate biosynthesis; 7,8-dihydrofolate from 2-amino-4-hydroxy-6-hydroxymethyl-7,8-dihydropteridine diphosphate and 4-aminobenzoate: step 1/2. Can complement an H.volcanii mutant strain that is thymidine auxotroph because it lacks the two dihydrofolate reductase genes encoded by hdrA and hdrB. The sequence is that of Probable bifunctional folylpolyglutamate synthase/dihydropteroate synthase (folP) from Halobacterium salinarum (strain ATCC 700922 / JCM 11081 / NRC-1) (Halobacterium halobium).